Reading from the N-terminus, the 243-residue chain is Small ribosomal subunit protein uS2 (243 aa).

This sequence belongs to the universal ribosomal protein uS2 family.

The protein is Small ribosomal subunit protein uS2 of Pseudoalteromonas atlantica (strain T6c / ATCC BAA-1087).